Consider the following 553-residue polypeptide: Zinc finger protein 426 (553 aa).

Positions 40–111 constitute a KRAB domain; the sequence is VSFDDVIVDF…KIVFPEWKIQ (72 aa). 11 consecutive C2H2-type zinc fingers follow at residues 222–244, 277–299, 305–327, 333–355, 361–383, 389–411, 417–439, 445–467, 473–495, 501–525, and 531–553; these read FECS…QRTH, HRCK…MRTH, YECK…GRTH, YVCN…VRSH, YACK…IRTH, FVCV…LKMH, CECK…MRTH, YTCK…MRIH, YECK…ERTH, YECK…SHTH, and YKCQ…ERIH.

The protein localises to the nucleus. In terms of biological role, may be involved in transcriptional regulation. The protein is Zinc finger protein 426 (Znf426) of Rattus norvegicus (Rat).